The primary structure comprises 355 residues: Beta-ketoacyl-[acyl-carrier-protein] synthase III 1 (355 aa).

Catalysis depends on residues cysteine 122 and histidine 280. Residues 281–285 form an ACP-binding region; that stretch reads QANER. The active site involves asparagine 311.

This sequence belongs to the thiolase-like superfamily. FabH family. As to quaternary structure, homodimer.

It is found in the cytoplasm. It carries out the reaction malonyl-[ACP] + acetyl-CoA + H(+) = 3-oxobutanoyl-[ACP] + CO2 + CoA. Its pathway is lipid metabolism; fatty acid biosynthesis. Its function is as follows. Catalyzes the condensation reaction of fatty acid synthesis by the addition to an acyl acceptor of two carbons from malonyl-ACP. Catalyzes the first condensation reaction which initiates fatty acid synthesis and may therefore play a role in governing the total rate of fatty acid production. Possesses both acetoacetyl-ACP synthase and acetyl transacylase activities. Its substrate specificity determines the biosynthesis of branched-chain and/or straight-chain of fatty acids. This chain is Beta-ketoacyl-[acyl-carrier-protein] synthase III 1, found in Streptomyces avermitilis (strain ATCC 31267 / DSM 46492 / JCM 5070 / NBRC 14893 / NCIMB 12804 / NRRL 8165 / MA-4680).